We begin with the raw amino-acid sequence, 211 residues long: MIIKVIPVGPIAVNCSVVADEKSGEAIIIDPGAEAEKILEAVKDFKVVGIVATHGHIDHVGQVGKLKELFDVPFYMNPLDKFLINDEIWSGFASYIGAVPCPEPDVEISEGDVIRVGDVEFKVLHTPGHTPGLCCLYEEKRRVLIAGDLLFKGSVGRWDLPGGNLVELKKSVKRVLTELPQDTLVICGHYDETTIGQERAFNPFAGELLNG.

Residues histidine 54, histidine 56, aspartate 58, histidine 59, histidine 129, aspartate 148, and histidine 189 each contribute to the Zn(2+) site.

This sequence belongs to the metallo-beta-lactamase superfamily. Glyoxalase II family. Zn(2+) is required as a cofactor.

This is an uncharacterized protein from Aquifex aeolicus (strain VF5).